Here is a 259-residue protein sequence, read N- to C-terminus: Translation initiation factor IF-2, chloroplastic (259 aa).

The 89-residue stretch at 171 to 259 folds into the tr-type G domain; the sequence is LRAPIVAVLG…LLIIAADEGI (89 aa). 180–187 lines the GTP pocket; it reads GHVNHGKT.

Belongs to the TRAFAC class translation factor GTPase superfamily. Classic translation factor GTPase family. IF-2 subfamily.

The protein localises to the plastid. It is found in the chloroplast. Functionally, one of the essential components for the initiation of protein synthesis. Protects formylmethionyl-tRNA from spontaneous hydrolysis and promotes its binding to the 30S ribosomal subunits. Also involved in the hydrolysis of GTP during the formation of the 70S ribosomal complex. This is Translation initiation factor IF-2, chloroplastic (infB) from Galdieria sulphuraria (Red alga).